The sequence spans 113 residues: Urotensin-2B (113 aa).

The N-terminal stretch at 1-27 (MKVFSTSLWCGLLTLLSVMNLFKSVRG) is a signal peptide. Positions 28–103 (RPHLSSGHEL…LDNLSSSHTK (76 aa)) are excised as a propeptide. Cysteines 107 and 112 form a disulfide.

This sequence belongs to the urotensin-2 family.

The protein resides in the secreted. Its function is as follows. Potent vasoconstrictor. The polypeptide is Urotensin-2B (Uts2b) (Mus musculus (Mouse)).